The chain runs to 1195 residues: DNA-directed RNA polymerase subunit Rpo2 (1195 aa).

Residues 894 to 909 (LEEGEERLGPQRRRES) are compositionally biased toward basic and acidic residues. The segment at 894–914 (LEEGEERLGPQRRRESSVTMR) is disordered. 4 residues coordinate Zn(2+): Cys-1135, Cys-1140, Cys-1155, and Cys-1158.

This sequence belongs to the RNA polymerase beta chain family. In terms of assembly, part of the RNA polymerase complex. Requires Zn(2+) as cofactor.

It is found in the cytoplasm. The enzyme catalyses RNA(n) + a ribonucleoside 5'-triphosphate = RNA(n+1) + diphosphate. Functionally, DNA-dependent RNA polymerase (RNAP) catalyzes the transcription of DNA into RNA using the four ribonucleoside triphosphates as substrates. This subunit is involved in DNA promoter recognition. This Thermoplasma acidophilum (strain ATCC 25905 / DSM 1728 / JCM 9062 / NBRC 15155 / AMRC-C165) protein is DNA-directed RNA polymerase subunit Rpo2.